The sequence spans 522 residues: Proactivator polypeptide-like 1 (522 aa).

A signal peptide spans 1-17 (MLCALILWSGLLGAARA). The propeptide occupies 18-59 (SPISVPRECAKGSEVWCQDLQAAAKCRAVRHCQSAVWNKPTV). Residues 19–59 (PISVPRECAKGSEVWCQDLQAAAKCRAVRHCQSAVWNKPTV) enclose the Saposin A-type 1 domain. Saposin B-type domains are found at residues 60 to 144 (KSLP…EPLQ), 183 to 261 (EGAV…ERES), 291 to 371 (LGLT…GSKR), and 393 to 474 (QGSF…HGPK). Disulfide bonds link cysteine 64-cysteine 140, cysteine 67-cysteine 134, and cysteine 95-cysteine 107. Positions 146–183 (HLAETTSERPLTQEDANEVMAPFLSNGALSFHPSQMPE) are excised as a propeptide. Intrachain disulfides connect cysteine 187–cysteine 257, cysteine 190–cysteine 251, and cysteine 216–cysteine 227. An N-linked (GlcNAc...) asparagine glycan is attached at asparagine 204. The propeptide occupies 261-290 (SAHWLTRVAAVDGVPSLEMEMPRTNELQMQ). 3 disulfides stabilise this stretch: cysteine 295/cysteine 367, cysteine 298/cysteine 361, and cysteine 326/cysteine 337. An N-linked (GlcNAc...) (high mannose) asparagine glycan is attached at asparagine 312. A propeptide spanning residues 371 to 392 (RRARSISRAVATTPSLPVDEEN) is cleaved from the precursor. Cystine bridges form between cysteine 397-cysteine 470, cysteine 400-cysteine 464, and cysteine 428-cysteine 439. Residues 475–522 (TPLLGTDQCVMGPSFWCKSPEAAEMCNALEHCQRLVWKKPVSKINEQP) constitute a propeptide that is removed on maturation. A Saposin A-type 2 domain is found at 476-516 (PLLGTDQCVMGPSFWCKSPEAAEMCNALEHCQRLVWKKPVS).

Its subcellular location is the secreted. Its function is as follows. May activate the lysosomal degradation of sphingolipids. The polypeptide is Proactivator polypeptide-like 1 (Psapl1) (Mus musculus (Mouse)).